We begin with the raw amino-acid sequence, 242 residues long: Large ribosomal subunit protein uL3 (242 aa).

Gln151 bears the N5-methylglutamine mark.

This sequence belongs to the universal ribosomal protein uL3 family. Part of the 50S ribosomal subunit. Forms a cluster with proteins L14 and L19. In terms of processing, methylated by PrmB.

One of the primary rRNA binding proteins, it binds directly near the 3'-end of the 23S rRNA, where it nucleates assembly of the 50S subunit. The polypeptide is Large ribosomal subunit protein uL3 (Zymomonas mobilis subsp. mobilis (strain ATCC 31821 / ZM4 / CP4)).